The primary structure comprises 175 residues: Translation initiation factor IF-3 (175 aa).

Belongs to the IF-3 family. Monomer.

The protein localises to the cytoplasm. In terms of biological role, IF-3 binds to the 30S ribosomal subunit and shifts the equilibrium between 70S ribosomes and their 50S and 30S subunits in favor of the free subunits, thus enhancing the availability of 30S subunits on which protein synthesis initiation begins. The polypeptide is Translation initiation factor IF-3 (Aquifex aeolicus (strain VF5)).